Consider the following 390-residue polypeptide: uncharacterized protein (390 aa).

One can recognise a Glutaredoxin domain in the interval Ser-215–Glu-325.

This is an uncharacterized protein from Arabidopsis thaliana (Mouse-ear cress).